Reading from the N-terminus, the 231-residue chain is 7-cyano-7-deazaguanine synthase (231 aa).

An ATP-binding site is contributed by 8-18 (FSGGQDSTTCL). Cys187, Cys196, Cys199, and Cys202 together coordinate Zn(2+).

This sequence belongs to the QueC family. Requires Zn(2+) as cofactor.

The enzyme catalyses 7-carboxy-7-deazaguanine + NH4(+) + ATP = 7-cyano-7-deazaguanine + ADP + phosphate + H2O + H(+). The protein operates within purine metabolism; 7-cyano-7-deazaguanine biosynthesis. In terms of biological role, catalyzes the ATP-dependent conversion of 7-carboxy-7-deazaguanine (CDG) to 7-cyano-7-deazaguanine (preQ(0)). The protein is 7-cyano-7-deazaguanine synthase of Vibrio vulnificus (strain CMCP6).